Reading from the N-terminus, the 113-residue chain is Large ribosomal subunit protein bL19 (113 aa).

Belongs to the bacterial ribosomal protein bL19 family.

Functionally, this protein is located at the 30S-50S ribosomal subunit interface and may play a role in the structure and function of the aminoacyl-tRNA binding site. The polypeptide is Large ribosomal subunit protein bL19 (rplS) (Mycobacterium bovis (strain ATCC BAA-935 / AF2122/97)).